Here is a 284-residue protein sequence, read N- to C-terminus: Ribosomal RNA small subunit methyltransferase A (284 aa).

S-adenosyl-L-methionine contacts are provided by N26, L28, G53, E74, D97, and N127.

It belongs to the class I-like SAM-binding methyltransferase superfamily. rRNA adenine N(6)-methyltransferase family. RsmA subfamily.

It localises to the cytoplasm. The catalysed reaction is adenosine(1518)/adenosine(1519) in 16S rRNA + 4 S-adenosyl-L-methionine = N(6)-dimethyladenosine(1518)/N(6)-dimethyladenosine(1519) in 16S rRNA + 4 S-adenosyl-L-homocysteine + 4 H(+). Functionally, specifically dimethylates two adjacent adenosines (A1518 and A1519) in the loop of a conserved hairpin near the 3'-end of 16S rRNA in the 30S particle. May play a critical role in biogenesis of 30S subunits. The polypeptide is Ribosomal RNA small subunit methyltransferase A (Anaeromyxobacter dehalogenans (strain 2CP-C)).